The following is a 115-amino-acid chain: Large ribosomal subunit protein eL30 (115 aa).

Ser-10 and Ser-16 each carry phosphoserine. Lys-26 carries the N6-acetyllysine; alternate modification. Lys-26 is covalently cross-linked (Glycyl lysine isopeptide (Lys-Gly) (interchain with G-Cter in SUMO2); alternate).

This sequence belongs to the eukaryotic ribosomal protein eL30 family. Component of the large ribosomal subunit.

Its subcellular location is the cytoplasm. Component of the large ribosomal subunit. The ribosome is a large ribonucleoprotein complex responsible for the synthesis of proteins in the cell. The polypeptide is Large ribosomal subunit protein eL30 (RPL30) (Oryctolagus cuniculus (Rabbit)).